The chain runs to 542 residues: MRPSCASSSSSSASPSLRLSSVTVAVDKATSELLRTPDWTIIIAICDSLNSNRWQCKDAIKAVKRRLQHKSSRVQLLTLTLLEAMLKNCGDFVHSHIAEKHLLEDMVKLVRKKGDFEVRNKLLILLDTWNEAFSGVACKHPHYNWAYQELKRCGVKFPQRSKEAPLMLEPPPPVTQSSSSSSMNLMSIGSFRRLDETMATEIESLSLSSLESMRNVMDLVNDMVQAVNPSDKSALKDELIVDLVEQCRSNQKKLIQMLTTTADEDVLARGLELNDSLQVVLARHDAIASGVSLPLLLQAPEPRETSSSLKTCGAAALESADSESSSSSSSSESETDEVEDVKDDFIQLAKRHALLNALHSDEEEETLLLGNDNEKTAEAEAKTQCKDLALFDTTTTTTTKSEQDIIELLSLTLSTTALPSPQTQPQTQHPSFFADDNILMNSYVVPWAQSQEEPQVPKMTQFAPSGPQFQPWPLQQQQPYSYGYPQPQWSGGQVNSNDTTFWSQGGNENMVFERNLQVSNSFPARATGTSGAATAATVDRQP.

Positions 29-158 (ATSELLRTPD…ELKRCGVKFP (130 aa)) constitute a VHS domain. Residue Ser-161 is modified to Phosphoserine. A GAT domain is found at 201–289 (EIESLSLSSL…VLARHDAIAS (89 aa)). The interval 303-340 (RETSSSLKTCGAAALESADSESSSSSSSSESETDEVED) is disordered. The segment covering 314-332 (AAALESADSESSSSSSSSE) has biased composition (low complexity). Ser-521 is subject to Phosphoserine. Positions 522 to 542 (FPARATGTSGAATAATVDRQP) are disordered. The segment covering 524–542 (ARATGTSGAATAATVDRQP) has biased composition (low complexity).

This sequence belongs to the TOM1 family. In terms of tissue distribution, preferentially expressed in flowers.

It is found in the membrane. Its function is as follows. Might contribute to the loading of the ESCRT machinery. The sequence is that of TOM1-like protein 7 from Arabidopsis thaliana (Mouse-ear cress).